Here is an 882-residue protein sequence, read N- to C-terminus: Alanine--tRNA ligase (882 aa).

The Zn(2+) site is built by His574, His578, Cys682, and His686. The segment at Gly853 to Pro882 is disordered. Gly residues predominate over residues Gly854–Leu868.

Belongs to the class-II aminoacyl-tRNA synthetase family. Zn(2+) is required as a cofactor.

The protein localises to the cytoplasm. It carries out the reaction tRNA(Ala) + L-alanine + ATP = L-alanyl-tRNA(Ala) + AMP + diphosphate. Functionally, catalyzes the attachment of alanine to tRNA(Ala) in a two-step reaction: alanine is first activated by ATP to form Ala-AMP and then transferred to the acceptor end of tRNA(Ala). Also edits incorrectly charged Ser-tRNA(Ala) and Gly-tRNA(Ala) via its editing domain. This Thermus thermophilus (strain ATCC BAA-163 / DSM 7039 / HB27) protein is Alanine--tRNA ligase.